The chain runs to 415 residues: Ornithine cyclodeaminase (415 aa).

9 residues coordinate NAD(+): Asn241, Ala242, Asp320, Thr352, Leu354, His355, Asp373, Asp396, and Val397.

Belongs to the AgrE/ArgZ ornithine cyclodeaminase family. It depends on NAD(+) as a cofactor.

It catalyses the reaction L-ornithine = L-proline + NH4(+). In terms of biological role, catalyzes the conversion of ornithine to proline, with the release of ammonia. The polypeptide is Ornithine cyclodeaminase (Methanococcus maripaludis (strain DSM 14266 / JCM 13030 / NBRC 101832 / S2 / LL)).